The sequence spans 223 residues: Putative HTLV-1-related endogenous sequence (223 aa).

Over residues 1 to 19 the composition is skewed to low complexity; sequence MRCAHAPAPRTRYPTRAPS. The disordered stretch occupies residues 1-184; it reads MRCAHAPAPR…ARAHGEAGAG (184 aa). The segment covering 115–126 has biased composition (basic and acidic residues); it reads GDRRREGPDRSP. Low complexity predominate over residues 133-157; that stretch reads PAAAAQPDSSSAQAPGPSTLRPAAT.

The chain is Putative HTLV-1-related endogenous sequence (HRES1) from Homo sapiens (Human).